A 614-amino-acid polypeptide reads, in one-letter code: MIKKASLLTACSVTAFSAWAQDTSPDTLVVTANRFEQPRSTVLAPTTVVTRQDIDRWQSTSVNDVLRRLPGVDITQNGGSGQLSSIFIRGTNASHVLVLIDGVRLNLAGVSGSADLSQFPIALVQRVEYIRGPRSAVYGSDAIGGVVNIITTRDHPGTEISAGWGSNSYQNYDVSTQQQLGDKTRVTLLGDYAHTHGYDVVAYGNTGTQAQPDNDGFLSKTLYGALEHNFTDVWSGFVRGYGYDNRTNYDAYYSPGLPLVDTRKLYSQSWDAGLRYNGELIKSQLITSYSHSKDYNYDPHYGRYDSSATLDEMKQYTVQWANNIIIGHGNIGAGVDWQKQSTAPGTAYVEDGYDQRNTGIYLTGLQQVGDFTFEGAGRSDDNSQFGRHGTWQTSAGWEFIEGYRFIASYGTSYKAPNLGQLYGSYGNPNLNPEKSKQWEGAFEGLTAGVNWRISGYRNDVSDLIDYDDHTLKYYNEGKARIKGVEATANFDTGPLTHTVSYDYVDARNAITDTPLLRRAKQQVKYQLDWQLYDFDWGITYQYLGTRYDKDYSSYPYQTVKMGGVSLWDLAVAYPVTSHLTVRGKIANLFDKDYETVYGYQTAGREYTLSGSYTF.

The signal sequence occupies residues 1-20; the sequence is MIKKASLLTACSVTAFSAWA. Positions 26–33 match the TonB box motif; that stretch reads DTLVVTAN. The TBDR plug domain occupies 38–152; that stretch reads PRSTVLAPTT…IGGVVNIITT (115 aa). Cyanocob(III)alamin contacts are provided by residues leucine 83, serine 85, asparagine 92, and 110-111; that span reads VS. The 460-residue stretch at 155–614 folds into the TBDR beta-barrel domain; the sequence is HPGTEISAGW…EYTLSGSYTF (460 aa). 3 beta stranded membrane passes run 158-165, 169-178, and 184-195; these read TEISAGWG, YQNYDVSTQQ, and TRVTLLGDYAHT. Residues aspartate 199, glutamine 211, aspartate 213, and aspartate 215 each coordinate Ca(2+). 2 beta stranded membrane passes run 217-227 and 232-248; these read FLSKTLYGALE and DVWS…NRTN. Tyrosine 249 and aspartate 250 together coordinate Ca(2+). Residue alanine 251 participates in cyanocob(III)alamin binding. Aspartate 261 contacts Ca(2+). Transmembrane regions (beta stranded) follow at residues 263–277, 279–296, 309–325, 328–337, 353–369, 371–381, 385–400, 403–417, 434–443, 449–458, 473–490, 494–509, 517–529, and 535–550; these read RKLY…LRYN, ELIK…KDYN, TLDE…NNII, HGNIGAGVDW, YDQR…QQVG, FTFEGAGRSDD, FGRH…WEFI, YRFI…KAPN, KSKQWEGAFE, VNWRISGYRN, YYNE…TANF, PLTH…ARNA, RRAK…QLDW, and DWGI…YDKD. Threonine 309 provides a ligand contact to cyanocob(III)alamin. Cyanocob(III)alamin is bound at residue arginine 517. Tyrosine 551 serves as a coordination point for cyanocob(III)alamin. Beta stranded transmembrane passes span 558 to 572, 585 to 596, and 602 to 614; these read TVKM…LAVA, IANLFDKDYETV, and AGRE…SYTF. A TonB C-terminal box motif is present at residues 597-614; it reads YGYQTAGREYTLSGSYTF.

Belongs to the TonB-dependent receptor family. BtuB (TC 1.B.14.3.1) subfamily.

Its subcellular location is the cell outer membrane. Involved in the active translocation of vitamin B12 (cyanocobalamin) across the outer membrane to the periplasmic space. It derives its energy for transport by interacting with the trans-periplasmic membrane protein TonB. This chain is Vitamin B12 transporter BtuB, found in Escherichia coli O6:K15:H31 (strain 536 / UPEC).